Consider the following 239-residue polypeptide: Adapter protein MecA (239 aa).

Residues 118–128 (EQRTKEKEAQG) are compositionally biased toward basic and acidic residues. The interval 118 to 137 (EQRTKEKEAQGSKRQKSSAR) is disordered.

Belongs to the MecA family. In terms of assembly, homodimer.

In terms of biological role, enables the recognition and targeting of unfolded and aggregated proteins to the ClpC protease or to other proteins involved in proteolysis. The chain is Adapter protein MecA from Staphylococcus aureus (strain bovine RF122 / ET3-1).